We begin with the raw amino-acid sequence, 310 residues long: Oxygen-dependent coproporphyrinogen-III oxidase (310 aa).

Serine 97 is a substrate binding site. The a divalent metal cation site is built by histidine 101 and histidine 111. Histidine 111 acts as the Proton donor in catalysis. 113-115 (NFR) is a binding site for substrate. A divalent metal cation contacts are provided by histidine 150 and histidine 180. Residues 245-280 (YVEFNLLYDRGTRFGLEFGGRTESILMSLPPRVVWR) form an important for dimerization region. 263-265 (GGR) contributes to the substrate binding site.

This sequence belongs to the aerobic coproporphyrinogen-III oxidase family. Homodimer. The cofactor is a divalent metal cation.

The protein resides in the cytoplasm. It carries out the reaction coproporphyrinogen III + O2 + 2 H(+) = protoporphyrinogen IX + 2 CO2 + 2 H2O. Its pathway is porphyrin-containing compound metabolism; protoporphyrin-IX biosynthesis; protoporphyrinogen-IX from coproporphyrinogen-III (O2 route): step 1/1. Functionally, involved in the heme biosynthesis. Catalyzes the aerobic oxidative decarboxylation of propionate groups of rings A and B of coproporphyrinogen-III to yield the vinyl groups in protoporphyrinogen-IX. In Coxiella burnetii (strain RSA 493 / Nine Mile phase I), this protein is Oxygen-dependent coproporphyrinogen-III oxidase.